Reading from the N-terminus, the 27-residue chain is HSDGTFTSELSRLRDSARLQRLLQGLV.

Val-27 carries the valine amide modification.

It belongs to the glucagon family.

It localises to the secreted. Functionally, hormone involved in different processes, such as regulation of the pH of the duodenal content, food intake and water homeostasis. Exerts its biological effects by binding to secretin receptor (SCTR), a G-protein coupled receptor expressed in the basolateral domain of several cells. Acts as a key gastrointestinal hormone by regulating the pH of the duodenal content. Secreted by S cells of the duodenum in the crypts of Lieberkuehn and regulates the pH of the duodenum by (1) inhibiting the secretion of gastric acid from the parietal cells of the stomach and (2) stimulating the production of bicarbonate (NaHCO(3)) from the ductal cells of the pancreas. Production of bicarbonate is essential to neutralize the pH and ensure no damage is done to the small intestine by the gastric acid. In addition to regulating the pH of the duodenal content, plays a central role in diet induced thermogenesis: acts as a non-sympathetic brown fat (BAT) activator mediating prandial thermogenesis, which consequentially induces satiation. Mechanistically, secretin released by the gut after a meal binds to secretin receptor (SCTR) in brown adipocytes, activating brown fat thermogenesis by stimulating lipolysis, which is sensed in the brain and promotes satiation. Also able to stimulate lipolysis in white adipocytes. Also plays an important role in cellular osmoregulation: released into the systemic circulation in response to hyperosmolality and acts at different levels in the hypothalamus, pituitary and kidney to regulate water homeostasis. Also plays a role in the central nervous system, possibly by acting as a neuropeptide hormone: required for hippocampal synaptic function and neural progenitor cells maintenance. In Bos taurus (Bovine), this protein is Secretin.